The following is a 248-amino-acid chain: Large ribosomal subunit protein uL4 (248 aa).

Residues 69-92 are disordered; that stretch reads HVPRLKNGSRAAKVPQAKGGREAH.

It belongs to the universal ribosomal protein uL4 family. In terms of assembly, part of the 50S ribosomal subunit.

One of the primary rRNA binding proteins, this protein initially binds near the 5'-end of the 23S rRNA. It is important during the early stages of 50S assembly. It makes multiple contacts with different domains of the 23S rRNA in the assembled 50S subunit and ribosome. In terms of biological role, forms part of the polypeptide exit tunnel. This is Large ribosomal subunit protein uL4 from Methanoregula boonei (strain DSM 21154 / JCM 14090 / 6A8).